A 124-amino-acid polypeptide reads, in one-letter code: Large ribosomal subunit protein mL52 (124 aa).

A mitochondrion-targeting transit peptide spans 1–23; sequence MAALGMLLSTGVRRLHCGSAARA. The disordered stretch occupies residues 99–124; that stretch reads LQEEKRKQQNALKPKGVLLQNPGPSQ.

Belongs to the mitochondrion-specific ribosomal protein mL52 family. Component of the mitochondrial ribosome large subunit (39S) which comprises a 16S rRNA and about 50 distinct proteins.

Its subcellular location is the mitochondrion. This is Large ribosomal subunit protein mL52 (MRPL52) from Bos taurus (Bovine).